A 106-amino-acid polypeptide reads, in one-letter code: Large ribosomal subunit protein uL24 (106 aa).

It belongs to the universal ribosomal protein uL24 family. Part of the 50S ribosomal subunit.

Its function is as follows. One of two assembly initiator proteins, it binds directly to the 5'-end of the 23S rRNA, where it nucleates assembly of the 50S subunit. One of the proteins that surrounds the polypeptide exit tunnel on the outside of the subunit. The polypeptide is Large ribosomal subunit protein uL24 (Porphyromonas gingivalis (strain ATCC 33277 / DSM 20709 / CIP 103683 / JCM 12257 / NCTC 11834 / 2561)).